Consider the following 489-residue polypeptide: UDP-glycosyltransferase 85A1 (489 aa).

Residues Ser307, 364 to 366 (CPQ), 381 to 389 (HCGWNSILE), and 403 to 406 (FADQ) each bind UDP-alpha-D-glucose.

This sequence belongs to the UDP-glycosyltransferase family. In terms of tissue distribution, expressed in root tips, lateral root initials, root apex, shoots, leaf periphery, leaf primordia and flowers.

Involved in the O-glucosylation of trans-zeatin and dihydrozeatin. Also active in vitro on cis-zeatin. Not active on N-glucosylated substrates. This Arabidopsis thaliana (Mouse-ear cress) protein is UDP-glycosyltransferase 85A1 (UGT85A1).